A 275-amino-acid chain; its full sequence is NH(3)-dependent NAD(+) synthetase (275 aa).

46 to 53 contacts ATP; the sequence is GISGGQDS. Mg(2+) is bound at residue Asp-52. Residue Arg-141 coordinates deamido-NAD(+). Position 161 (Thr-161) interacts with ATP. Residue Glu-166 coordinates Mg(2+). Residues Lys-174 and Asp-181 each coordinate deamido-NAD(+). Residues Lys-190 and Thr-212 each coordinate ATP. Deamido-NAD(+) is bound at residue 261 to 262; it reads HK.

The protein belongs to the NAD synthetase family. In terms of assembly, homodimer.

The enzyme catalyses deamido-NAD(+) + NH4(+) + ATP = AMP + diphosphate + NAD(+) + H(+). The protein operates within cofactor biosynthesis; NAD(+) biosynthesis; NAD(+) from deamido-NAD(+) (ammonia route): step 1/1. Its function is as follows. Catalyzes the ATP-dependent amidation of deamido-NAD to form NAD. Uses ammonia as a nitrogen source. The chain is NH(3)-dependent NAD(+) synthetase from Limosilactobacillus reuteri (strain DSM 20016) (Lactobacillus reuteri).